The chain runs to 355 residues: C-C chemokine receptor type 8 (355 aa).

The Extracellular portion of the chain corresponds to 1-35 (MDYTLDLSVTTVTDYYYPDIFSSPCDAELIQTNGK). A helical membrane pass occupies residues 36–63 (LLLAVFYCLLFVFSLLGNSLVILVLVVC). Over 64–73 (KKLRSITDVY) the chain is Cytoplasmic. Residues 74-93 (LLNLALSDLLFVFSFPFQTY) form a helical membrane-spanning segment. The Extracellular segment spans residues 94 to 107 (YLLDQWVFGTVMCK). Cys106 and Cys183 are oxidised to a cystine. A helical transmembrane segment spans residues 108 to 129 (VVSGFYYIGFYSSMFFITLMSV). The Cytoplasmic portion of the chain corresponds to 130–146 (DRYLAVVHAVYALKVRT). The chain crosses the membrane as a helical span at residues 147–171 (IRMGTTLCLAVWLTAIMATIPLLVF). The Extracellular portion of the chain corresponds to 172–202 (YQVASEDGVLQCYSFYNQQTLKWKIFTNFKM). A helical transmembrane segment spans residues 203 to 222 (NILGLLIPFTIFMFCYIKIL). Residues 223–238 (HQLKRCQNHNKTKAIR) are Cytoplasmic-facing. The helical transmembrane segment at 239–263 (LVLIVVIASLLFWVPFNVVLFLTSL) threads the bilayer. Topologically, residues 264–280 (HSMHILDGCSISQQLTY) are extracellular. Residues 281-304 (ATHVTEIISFTHCCVNPVIYAFVG) form a helical membrane-spanning segment. Residues 305–355 (EKFKKHLSEIFQKSCSQIFNYLGRQMPRESCEKSSSCQQHSSRSSSVDYIL) lie on the Cytoplasmic side of the membrane.

The protein belongs to the G-protein coupled receptor 1 family.

The protein resides in the cell membrane. Receptor for the chemokine CCL1/SCYA1/I-309. May regulate monocyte chemotaxis and thymic cell line apoptosis. Alternative coreceptor with CD4 for HIV-1 infection. The protein is C-C chemokine receptor type 8 (CCR8) of Homo sapiens (Human).